We begin with the raw amino-acid sequence, 391 residues long: 1-deoxy-D-xylulose 5-phosphate reductoisomerase (391 aa).

The NADPH site is built by T11, G12, S13, I14, and N126. Residue K127 coordinates 1-deoxy-D-xylulose 5-phosphate. Position 128 (E128) interacts with NADPH. Position 152 (D152) interacts with Mn(2+). 1-deoxy-D-xylulose 5-phosphate contacts are provided by S153, E154, S176, and H199. E154 provides a ligand contact to Mn(2+). G205 is an NADPH binding site. Residues S212, N217, K218, and E221 each coordinate 1-deoxy-D-xylulose 5-phosphate. Position 221 (E221) interacts with Mn(2+).

This sequence belongs to the DXR family. Requires Mg(2+) as cofactor. Mn(2+) serves as cofactor.

It carries out the reaction 2-C-methyl-D-erythritol 4-phosphate + NADP(+) = 1-deoxy-D-xylulose 5-phosphate + NADPH + H(+). The protein operates within isoprenoid biosynthesis; isopentenyl diphosphate biosynthesis via DXP pathway; isopentenyl diphosphate from 1-deoxy-D-xylulose 5-phosphate: step 1/6. Catalyzes the NADPH-dependent rearrangement and reduction of 1-deoxy-D-xylulose-5-phosphate (DXP) to 2-C-methyl-D-erythritol 4-phosphate (MEP). The polypeptide is 1-deoxy-D-xylulose 5-phosphate reductoisomerase (Acidithiobacillus ferrooxidans (strain ATCC 53993 / BNL-5-31) (Leptospirillum ferrooxidans (ATCC 53993))).